Reading from the N-terminus, the 65-residue chain is Large ribosomal subunit protein uL29 (65 aa).

The protein belongs to the universal ribosomal protein uL29 family.

This chain is Large ribosomal subunit protein uL29, found in Acinetobacter baylyi (strain ATCC 33305 / BD413 / ADP1).